A 291-amino-acid chain; its full sequence is Pantothenate synthetase (291 aa).

30 to 37 (MGALHAGH) contributes to the ATP binding site. His-37 serves as the catalytic Proton donor. Gln-61 contributes to the (R)-pantoate binding site. Position 61 (Gln-61) interacts with beta-alanine. An ATP-binding site is contributed by 147–150 (GQKD). Gln-153 lines the (R)-pantoate pocket. ATP-binding positions include Val-176 and 184–187 (LSSR).

The protein belongs to the pantothenate synthetase family. As to quaternary structure, homodimer.

It is found in the cytoplasm. It carries out the reaction (R)-pantoate + beta-alanine + ATP = (R)-pantothenate + AMP + diphosphate + H(+). The protein operates within cofactor biosynthesis; (R)-pantothenate biosynthesis; (R)-pantothenate from (R)-pantoate and beta-alanine: step 1/1. In terms of biological role, catalyzes the condensation of pantoate with beta-alanine in an ATP-dependent reaction via a pantoyl-adenylate intermediate. This Koribacter versatilis (strain Ellin345) protein is Pantothenate synthetase.